The sequence spans 160 residues: Crossover junction endodeoxyribonuclease RuvC (160 aa).

Residues Asp-7, Glu-67, and Asp-138 contribute to the active site. Asp-7, Glu-67, and Asp-138 together coordinate Mg(2+).

The protein belongs to the RuvC family. As to quaternary structure, homodimer which binds Holliday junction (HJ) DNA. The HJ becomes 2-fold symmetrical on binding to RuvC with unstacked arms; it has a different conformation from HJ DNA in complex with RuvA. In the full resolvosome a probable DNA-RuvA(4)-RuvB(12)-RuvC(2) complex forms which resolves the HJ. Requires Mg(2+) as cofactor.

It is found in the cytoplasm. It catalyses the reaction Endonucleolytic cleavage at a junction such as a reciprocal single-stranded crossover between two homologous DNA duplexes (Holliday junction).. Functionally, the RuvA-RuvB-RuvC complex processes Holliday junction (HJ) DNA during genetic recombination and DNA repair. Endonuclease that resolves HJ intermediates. Cleaves cruciform DNA by making single-stranded nicks across the HJ at symmetrical positions within the homologous arms, yielding a 5'-phosphate and a 3'-hydroxyl group; requires a central core of homology in the junction. The consensus cleavage sequence is 5'-(A/T)TT(C/G)-3'. Cleavage occurs on the 3'-side of the TT dinucleotide at the point of strand exchange. HJ branch migration catalyzed by RuvA-RuvB allows RuvC to scan DNA until it finds its consensus sequence, where it cleaves and resolves the cruciform DNA. The chain is Crossover junction endodeoxyribonuclease RuvC from Brachyspira hyodysenteriae (strain ATCC 49526 / WA1).